The sequence spans 451 residues: Gamma-aminobutyric acid receptor subunit alpha-2 (451 aa).

Positions 1–28 are cleaved as a signal peptide; sequence MKTKLSTCNVWSLLLVLLVWDPVRLVLA. Residues 29–249 lie on the Extracellular side of the membrane; that stretch reads NIQEDEAKNN…MTAHFHLKRK (221 aa). N-linked (GlcNAc...) asparagine glycosylation is present at Asn38. Residue Arg94 participates in 4-aminobutanoate binding. Asn138 is a glycosylation site (N-linked (GlcNAc...) asparagine). Thr157 contributes to the 4-aminobutanoate binding site. Cys166 and Cys180 are joined by a disulfide. Residues 250 to 270 traverse the membrane as a helical segment; sequence IGYFVIQTYLPCIMTVILSQV. Residues 271–280 are Cytoplasmic-facing; that stretch reads SFWLNRESVP. Residues 281–300 form a helical membrane-spanning segment; the sequence is ARTVFGVTTVLTMTTLSISA. The Extracellular segment spans residues 301–311; sequence RNSLPKVAYAT. The helical transmembrane segment at 312 to 332 threads the bilayer; it reads AMDWFIAVCYAFVFSALIEFA. Over 333-420 the chain is Cytoplasmic; the sequence is TVNYFTKRGW…FNSVSKIDRM (88 aa). The tract at residues 389–408 is disordered; the sequence is KSATTPEPNKKPENKPAEAK. Basic and acidic residues predominate over residues 396 to 408; that stretch reads PNKKPENKPAEAK. A helical membrane pass occupies residues 421–441; the sequence is SRIVFPVLFGTFNLVYWATYL. Residues 442-451 are Extracellular-facing; that stretch reads NREPVLGVSP.

Belongs to the ligand-gated ion channel (TC 1.A.9) family. Gamma-aminobutyric acid receptor (TC 1.A.9.5) subfamily. GABRA2 sub-subfamily. Heteropentamer, formed by a combination of alpha (GABRA1-6), beta (GABRB1-3), gamma (GABRG1-3), delta (GABRD), epsilon (GABRE), rho (GABRR1-3), pi (GABRP) and theta (GABRQ) subunits, each subunit exhibiting distinct physiological and pharmacological properties. Interacts with UBQLN1. Interacts with KIF21B. Interacts with LHFPL4. Interacts with SHISA7; interaction leads to the regulation of GABA(A) receptor trafficking, channel deactivation kinetics and pharmacology. In terms of processing, glycosylated.

The protein localises to the postsynaptic cell membrane. Its subcellular location is the cell membrane. The protein resides in the cytoplasmic vesicle membrane. It is found in the cell projection. It localises to the dendrite. It catalyses the reaction chloride(in) = chloride(out). With respect to regulation, activated by pentobarbital. Inhibited by the antagonist bicuculline. Alpha subunit of the heteropentameric ligand-gated chloride channel gated by gamma-aminobutyric acid (GABA), a major inhibitory neurotransmitter in the brain. GABA-gated chloride channels, also named GABA(A) receptors (GABAAR), consist of five subunits arranged around a central pore and contain GABA active binding site(s) located at the alpha and beta subunit interface(s). When activated by GABA, GABAARs selectively allow the flow of chloride anions across the cell membrane down their electrochemical gradient. Chloride influx into the postsynaptic neuron following GABAAR opening decreases the neuron ability to generate a new action potential, thereby reducing nerve transmission. The alpha-2 subunit exhibits synaptogenic activity together with beta-2 and very little to no activity together with beta-3, the gamma-2 subunit being necessary but not sufficient to induce rapid synaptic contacts formation. This chain is Gamma-aminobutyric acid receptor subunit alpha-2, found in Mus musculus (Mouse).